A 208-amino-acid polypeptide reads, in one-letter code: Granulocyte colony-stimulating factor (208 aa).

The first 30 residues, 1–30 (MAQLSAQRRMKLMALQLLLWQSALWSGREA), serve as a signal peptide directing secretion. 2 disulfide bridges follow: Cys-72/Cys-78 and Cys-100/Cys-110. O-linked (GalNAc...) threonine glycosylation occurs at Thr-169.

This sequence belongs to the IL-6 superfamily. Monomer. In terms of processing, O-glycosylated.

The protein resides in the secreted. In terms of biological role, granulocyte/macrophage colony-stimulating factors are cytokines that act in hematopoiesis by controlling the production, differentiation, and function of 2 related white cell populations of the blood, the granulocytes and the monocytes-macrophages. This CSF induces granulocytes. In Mus musculus (Mouse), this protein is Granulocyte colony-stimulating factor (Csf3).